A 242-amino-acid polypeptide reads, in one-letter code: Large ribosomal subunit protein uL1 (242 aa).

It belongs to the universal ribosomal protein uL1 family. As to quaternary structure, part of the 50S ribosomal subunit.

Binds directly to 23S rRNA. The L1 stalk is quite mobile in the ribosome, and is involved in E site tRNA release. Its function is as follows. Protein L1 is also a translational repressor protein, it controls the translation of the L11 operon by binding to its mRNA. This Sulfurihydrogenibium sp. (strain YO3AOP1) protein is Large ribosomal subunit protein uL1.